The chain runs to 660 residues: Methionine--tRNA ligase (660 aa).

The short motif at 11 to 21 (PYANGPCHLGH) is the 'HIGH' region element. Cys143, Cys146, Cys155, and Cys158 together coordinate Zn(2+). The short motif at 325-329 (KMSTS) is the 'KMSKS' region element. Thr328 provides a ligand contact to ATP. Residues 563–660 (DFDKVVIKIG…DECEVGERIQ (98 aa)) enclose the tRNA-binding domain.

This sequence belongs to the class-I aminoacyl-tRNA synthetase family. MetG type 1 subfamily. In terms of assembly, homodimer. Zn(2+) is required as a cofactor.

Its subcellular location is the cytoplasm. It catalyses the reaction tRNA(Met) + L-methionine + ATP = L-methionyl-tRNA(Met) + AMP + diphosphate. Is required not only for elongation of protein synthesis but also for the initiation of all mRNA translation through initiator tRNA(fMet) aminoacylation. This chain is Methionine--tRNA ligase, found in Methanobrevibacter smithii (strain ATCC 35061 / DSM 861 / OCM 144 / PS).